The sequence spans 310 residues: Acetaldehyde dehydrogenase 1 (310 aa).

Residue 12–15 (SGNI) participates in NAD(+) binding. Catalysis depends on Cys132, which acts as the Acyl-thioester intermediate. Residues 163–171 (SAGPGTRAN) and Asn287 each bind NAD(+).

It belongs to the acetaldehyde dehydrogenase family.

It catalyses the reaction acetaldehyde + NAD(+) + CoA = acetyl-CoA + NADH + H(+). The chain is Acetaldehyde dehydrogenase 1 from Pseudomonas putida (strain W619).